Consider the following 307-residue polypeptide: UDP-3-O-acyl-N-acetylglucosamine deacetylase (307 aa).

Positions 78, 237, and 241 each coordinate Zn(2+). The Proton donor role is filled by His264.

It belongs to the LpxC family. Requires Zn(2+) as cofactor.

The enzyme catalyses a UDP-3-O-[(3R)-3-hydroxyacyl]-N-acetyl-alpha-D-glucosamine + H2O = a UDP-3-O-[(3R)-3-hydroxyacyl]-alpha-D-glucosamine + acetate. It participates in glycolipid biosynthesis; lipid IV(A) biosynthesis; lipid IV(A) from (3R)-3-hydroxytetradecanoyl-[acyl-carrier-protein] and UDP-N-acetyl-alpha-D-glucosamine: step 2/6. Functionally, catalyzes the hydrolysis of UDP-3-O-myristoyl-N-acetylglucosamine to form UDP-3-O-myristoylglucosamine and acetate, the committed step in lipid A biosynthesis. This is UDP-3-O-acyl-N-acetylglucosamine deacetylase from Azoarcus sp. (strain BH72).